The sequence spans 169 residues: Large ribosomal subunit protein uL18 (169 aa).

This sequence belongs to the universal ribosomal protein uL18 family. In terms of assembly, part of the 50S ribosomal subunit. Contacts the 5S and 23S rRNAs.

Functionally, this is one of the proteins that bind and probably mediate the attachment of the 5S RNA into the large ribosomal subunit, where it forms part of the central protuberance. The chain is Large ribosomal subunit protein uL18 from Methanothrix thermoacetophila (strain DSM 6194 / JCM 14653 / NBRC 101360 / PT) (Methanosaeta thermophila).